We begin with the raw amino-acid sequence, 122 residues long: Large ribosomal subunit protein uL18 (122 aa).

The protein belongs to the universal ribosomal protein uL18 family. As to quaternary structure, part of the 50S ribosomal subunit; part of the 5S rRNA/L5/L18/L25 subcomplex. Contacts the 5S and 23S rRNAs.

Functionally, this is one of the proteins that bind and probably mediate the attachment of the 5S RNA into the large ribosomal subunit, where it forms part of the central protuberance. This chain is Large ribosomal subunit protein uL18, found in Agathobacter rectalis (strain ATCC 33656 / DSM 3377 / JCM 17463 / KCTC 5835 / VPI 0990) (Eubacterium rectale).